The following is a 361-amino-acid chain: DNA polymerase IV 3 (361 aa).

The UmuC domain maps to 12-192 (IIHVDMDAFY…LPVNKFHGVG (181 aa)). 2 residues coordinate Mg(2+): aspartate 16 and aspartate 110. Glutamate 111 is an active-site residue.

This sequence belongs to the DNA polymerase type-Y family. In terms of assembly, monomer. Mg(2+) serves as cofactor.

It is found in the cytoplasm. The catalysed reaction is DNA(n) + a 2'-deoxyribonucleoside 5'-triphosphate = DNA(n+1) + diphosphate. Its function is as follows. Poorly processive, error-prone DNA polymerase involved in untargeted mutagenesis. Copies undamaged DNA at stalled replication forks, which arise in vivo from mismatched or misaligned primer ends. These misaligned primers can be extended by PolIV. Exhibits no 3'-5' exonuclease (proofreading) activity. May be involved in translesional synthesis, in conjunction with the beta clamp from PolIII. The protein is DNA polymerase IV 3 (dinB3) of Mesorhizobium japonicum (strain LMG 29417 / CECT 9101 / MAFF 303099) (Mesorhizobium loti (strain MAFF 303099)).